The primary structure comprises 1296 residues: Capping protein, Arp2/3 and myosin-I linker protein 2 (1296 aa).

15 LRR repeats span residues 63–87 (DCTF…TFEL), 88–110 (ESLP…AQHV), 248–271 (ELVL…LAGH), 273–296 (NSGL…ALGR), 305–328 (DSTL…DSGG), 363–386 (CSSL…AAPA), 395–415 (TRML…ALRA), 426–448 (IHDL…VIQD), 453–477 (AGAL…VLAI), 480–506 (SRSL…VLHR), 515–538 (DCPL…LIRA), 542–565 (NPKL…MLAK), 570–594 (NTRL…VAQA), 598–621 (NHSL…RPEL), and 836–859 (TMAP…GLEE). The interval 507-601 (IAQLMQDDDC…AQALEQNHSL (95 aa)) is tropomodulin-like. Residues 975-1002 (ATPVPRTLRKKLGTLFAFKKPRSTRGPR) form a necessary for localization at the cell membrane region. The segment at 988 to 1296 (TLFAFKKPRS…TDQRGGGPNP (309 aa)) is disordered. Phosphoserine is present on Ser1008. Basic and acidic residues-rich tracts occupy residues 1079–1091 (RPDK…RGDT) and 1118–1134 (ESKR…KAGS). Residue Ser1134 is modified to Phosphoserine. Position 1145 is a phosphothreonine (Thr1145). The span at 1176-1185 (TWKTLGQQLN) shows a compositional bias: polar residues. Arg1191 is subject to Omega-N-methylarginine. 2 stretches are compositionally biased toward pro residues: residues 1199–1209 (PGPPSPCPSPS) and 1267–1285 (PLPP…PPSP). A phosphoserine mark is found at Ser1203 and Ser1281.

Belongs to the CARMIL family. As to quaternary structure, forms homodimers. Interacts (via C-terminus) with heterodimeric capping protein (CP); the interaction inhibits CP activity and hence promotes actin polymerization at the barbed end of actin filaments.

It is found in the cytoplasm. Its subcellular location is the cytoskeleton. It localises to the cell membrane. The protein resides in the cell projection. The protein localises to the lamellipodium. It is found in the ruffle. Cell membrane-cytoskeleton-associated protein that plays a role in the regulation of actin polymerization at the barbed end of actin filaments. Prevents F-actin heterodimeric capping protein (CP) activity at the leading edges of migrating cells, and hence generates uncapped barbed ends and enhances actin polymerization. Plays a role in cell protrusion formations; involved in cell polarity, lamellipodial assembly, membrane ruffling and macropinosome formations. Involved as well in cell migration and invadopodia formation during wound healing. Required for CD28-mediated stimulation of NF-kappa-B signaling, involved in naive T cells activation, maturation into T memory cells, and differentiation into T helper cells. Required for CD28-mediated differentiation of T regulatory cells. This Mus musculus (Mouse) protein is Capping protein, Arp2/3 and myosin-I linker protein 2.